The chain runs to 306 residues: UDP-3-O-acyl-N-acetylglucosamine deacetylase (306 aa).

Zn(2+)-binding residues include H79, H238, and D242. Catalysis depends on H265, which acts as the Proton donor.

It belongs to the LpxC family. Zn(2+) serves as cofactor.

The enzyme catalyses a UDP-3-O-[(3R)-3-hydroxyacyl]-N-acetyl-alpha-D-glucosamine + H2O = a UDP-3-O-[(3R)-3-hydroxyacyl]-alpha-D-glucosamine + acetate. It functions in the pathway glycolipid biosynthesis; lipid IV(A) biosynthesis; lipid IV(A) from (3R)-3-hydroxytetradecanoyl-[acyl-carrier-protein] and UDP-N-acetyl-alpha-D-glucosamine: step 2/6. Functionally, catalyzes the hydrolysis of UDP-3-O-myristoyl-N-acetylglucosamine to form UDP-3-O-myristoylglucosamine and acetate, the committed step in lipid A biosynthesis. The polypeptide is UDP-3-O-acyl-N-acetylglucosamine deacetylase (Shewanella halifaxensis (strain HAW-EB4)).